The chain runs to 425 residues: 5-hydroxytryptamine receptor 7 (425 aa).

Residues 1–72 (MLIQVQPSHL…LLYGDTEKIV (72 aa)) are Extracellular-facing. Asn14, Asn41, and Asn51 each carry an N-linked (GlcNAc...) asparagine glycan. The helical transmembrane segment at 73–97 (IGVVLSIITLFTIAGNALVIISVCI) threads the bilayer. Topologically, residues 98–107 (VKKLRQPSNY) are cytoplasmic. The helical transmembrane segment at 108–129 (LVVSLAAADLSVAVAVMPFVII) threads the bilayer. Over 130-141 (TDLVGGEWLFGK) the chain is Extracellular. The chain crosses the membrane as a helical span at residues 142 to 167 (VFCNVFIAMDVMCCTASIMTLCVISV). The cysteines at positions 144 and 220 are disulfide-linked. Residue Asp151 participates in serotonin binding. The Cytoplasmic segment spans residues 168–187 (DRYLGITRPLTYPARQNGKL). The chain crosses the membrane as a helical span at residues 188-208 (MAKMVFIVWLLSASITLPPLF). At 209–226 (GWAKNVNVERVCLISQDF) the chain is on the extracellular side. A helical transmembrane segment spans residues 227–249 (GYTVYSTAVAFYIPMTVMLVMYQ). The Cytoplasmic portion of the chain corresponds to 250 to 322 (RIFVAAKISA…SIFKREQKAA (73 aa)). The helical transmembrane segment at 323–348 (RTLGIIVGAFTFCWLPFFLLSTARPF) threads the bilayer. The Extracellular portion of the chain corresponds to 349 to 359 (ICGIMCSCMPL). Residues 360–383 (RLERTLLWLGYTNSLINPLIYAFF) traverse the membrane as a helical segment. Over 384 to 425 (NRDLRTTFWNLLRCKYTNINRRLSAASMHEALKVTERHEGIL) the chain is Cytoplasmic. Cys397 carries S-palmitoyl cysteine lipidation.

This sequence belongs to the G-protein coupled receptor 1 family.

The protein resides in the cell membrane. G-protein coupled receptor for 5-hydroxytryptamine (serotonin), a biogenic hormone that functions as a neurotransmitter, a hormone and a mitogen. Ligand binding causes a conformation change that triggers signaling via guanine nucleotide-binding proteins (G proteins) and modulates the activity of downstream effectors. HTR7 is coupled to G(s) G alpha proteins and mediates activation of adenylate cyclase activity. The sequence is that of 5-hydroxytryptamine receptor 7 (htr7) from Xenopus laevis (African clawed frog).